The primary structure comprises 626 residues: Probable metalloendopeptidase G1-type (626 aa).

H42 provides a ligand contact to Zn(2+). Residue E45 is part of the active site. H46 serves as a coordination point for Zn(2+).

It belongs to the peptidase M44 family. Requires Zn(2+) as cofactor.

Seems to be involved in viral proteins maturation by cleavage at Ala-Gly-|-Xaa motifs. The protein is Probable metalloendopeptidase G1-type of Fowlpox virus (strain NVSL) (FPV).